Consider the following 218-residue polypeptide: Pyridoxine/pyridoxamine 5'-phosphate oxidase (218 aa).

Substrate contacts are provided by residues 14–17 (RREY) and K72. Residues 67-72 (RIVLLK), 82-83 (YT), R88, K89, and Q111 each bind FMN. Y129, R133, and S137 together coordinate substrate. FMN is bound by residues 146-147 (QS) and W191. Residue 197-199 (RLH) coordinates substrate. R201 contributes to the FMN binding site.

This sequence belongs to the pyridoxamine 5'-phosphate oxidase family. In terms of assembly, homodimer. FMN is required as a cofactor.

It carries out the reaction pyridoxamine 5'-phosphate + O2 + H2O = pyridoxal 5'-phosphate + H2O2 + NH4(+). The catalysed reaction is pyridoxine 5'-phosphate + O2 = pyridoxal 5'-phosphate + H2O2. The protein operates within cofactor metabolism; pyridoxal 5'-phosphate salvage; pyridoxal 5'-phosphate from pyridoxamine 5'-phosphate: step 1/1. It functions in the pathway cofactor metabolism; pyridoxal 5'-phosphate salvage; pyridoxal 5'-phosphate from pyridoxine 5'-phosphate: step 1/1. Functionally, catalyzes the oxidation of either pyridoxine 5'-phosphate (PNP) or pyridoxamine 5'-phosphate (PMP) into pyridoxal 5'-phosphate (PLP). The chain is Pyridoxine/pyridoxamine 5'-phosphate oxidase from Citrobacter koseri (strain ATCC BAA-895 / CDC 4225-83 / SGSC4696).